Consider the following 385-residue polypeptide: Cytochrome b (385 aa).

Residues 1–27 (MRLLKSHPLLKLVNSYLIDASQPSNIS) lie on the Mitochondrial matrix side of the membrane. Tyrosine 16 contacts a ubiquinone. A helical membrane pass occupies residues 28–51 (YLWNFGSLLACCLIIQIVTGVTLA). Residues 52–74 (MHYSPNVLEAFNSIEHIMRDVNN) lie on the Mitochondrial intermembrane side of the membrane. The helical transmembrane segment at 75–102 (GWLVRYLHSNTASAFFFLVYLHIGRGMY) threads the bilayer. The heme b site is built by histidine 82 and histidine 96. Residues 103–110 (YGSYRAPR) lie on the Mitochondrial matrix side of the membrane. A helical transmembrane segment spans residues 111–135 (TLVWAIGTVILILMMATAFLGYVLP). The Mitochondrial intermembrane segment spans residues 136–172 (YGQMSLWGATVITNLISAIPWIGQDIVEFIWGGFSVN). The chain crosses the membrane as a helical span at residues 173–205 (NATLNRFFALHFVLPFILAALVLMHLIALHDTA). Residues histidine 183 and histidine 197 each coordinate heme b. Histidine 202 is an a ubiquinone binding site. The Mitochondrial matrix portion of the chain corresponds to 206-224 (GSSNPLGVSGNYDRITFAP). The helical transmembrane segment at 225-247 (YYLFKDLITIFIFIYVLSSFVFF) threads the bilayer. The Mitochondrial intermembrane portion of the chain corresponds to 248-288 (MPNVLGDSENYIMANPMQTPPAIVPEWYLLPFYAILRSIPN). The helical transmembrane segment at 289-309 (KLLGVIAMFSAILAIMLLPIT) threads the bilayer. The Mitochondrial matrix segment spans residues 310–320 (DLGRSKGLQFR). Residues 321–341 (PLSKFAFWAFVVNFLILMKLG) form a helical membrane-spanning segment. Over 342-348 (ACHVESP) the chain is Mitochondrial intermembrane. Residues 349–365 (FIELGQFSTIFYFSYFI) traverse the membrane as a helical segment. The Mitochondrial matrix segment spans residues 366–385 (FIVPVLSLIENTLVDLNYLK).

This sequence belongs to the cytochrome b family. Component of the ubiquinol-cytochrome c oxidoreductase (cytochrome b-c1 complex, complex III, CIII), a multisubunit enzyme composed of 10 subunits. The complex is composed of 3 respiratory subunits cytochrome b (cob), cytochrome c1 (cyt-1) and Rieske protein (fes-1), 2 core protein subunits pep and ucr-1, and 5 low-molecular weight protein subunits qcr6, qcr7, qcr8, qcr9 and probably NCU16844/qcr10. The complex exists as an obligatory dimer and forms supercomplexes (SCs) in the inner mitochondrial membrane with NADH-ubiquinone oxidoreductase (complex I, CI) and cytochrome c oxidase (complex IV, CIV), resulting in different assemblies (supercomplexes SCI(1)III(2), SCIII(2)IV(1) and SCIII(2)IV(2) as well as higher order I(x)III(y)IV(z) megacomplexes). It depends on heme b as a cofactor.

It localises to the mitochondrion inner membrane. The catalysed reaction is a quinol + 2 Fe(III)-[cytochrome c](out) = a quinone + 2 Fe(II)-[cytochrome c](out) + 2 H(+)(out). Component of the ubiquinol-cytochrome c oxidoreductase, a multisubunit transmembrane complex that is part of the mitochondrial electron transport chain which drives oxidative phosphorylation. The respiratory chain contains 3 multisubunit complexes succinate dehydrogenase (complex II, CII), ubiquinol-cytochrome c oxidoreductase (cytochrome b-c1 complex, complex III, CIII) and cytochrome c oxidase (complex IV, CIV), that cooperate to transfer electrons derived from NADH and succinate to molecular oxygen, creating an electrochemical gradient over the inner membrane that drives transmembrane transport and the ATP synthase. The cytochrome b-c1 complex catalyzes electron transfer from ubiquinol to cytochrome c, linking this redox reaction to translocation of protons across the mitochondrial inner membrane, with protons being carried across the membrane as hydrogens on the quinol. In the process called Q cycle, 2 protons are consumed from the matrix, 4 protons are released into the intermembrane space and 2 electrons are passed to cytochrome c. Cytochrome b is a catalytic core subunit containing 2 b-type hemes BL and BH topographically segregated in the quinone reduction (Qi) and quinol oxidation (Q0) sites on opposite sides of the membrane. This chain is Cytochrome b (cob), found in Neurospora crassa (strain ATCC 24698 / 74-OR23-1A / CBS 708.71 / DSM 1257 / FGSC 987).